We begin with the raw amino-acid sequence, 552 residues long: MAPIGVLTALDQARTQYYHFKAIVIAGMGLFTDSYDLFCIAPVMKIVGRVYYSDGGARPGVTPPAVVSATVGVALLGAVIGNVVFGALGDRVGRRRVYGACLLLMVCSSVGSGFSVCRTRRCALASLCFFRFLLGVGVGGDYPLSATIMSEFANRRTRGAFIAAVFSMQGFGILASSAVTMAVAAAFDHYTGYPAPLDTPECADLAWRIILMAGAVPAALTYYWRMSMPETARYTALVERDVVKATNDIGRVLADLDLGAVAEEEVAAALSRPPPPPRPSYGLLSRRFVRQHGRDLFACAAAWFLLDIPYYSSTLFQSQIYRPLFPAPGLINAFQEAFNVAKFQAVIAVASTIPGYFVAVLLIDRVGRRCLQMAGFLLMAVFLFALAGPYDGYWRDHGAHAGYIVLYSLTFFSANLGPNTTTFILPAELFPARFRSTCHGLSGAAGKLGALVGSIGFLWASQQKDGAAAGHLPGIGMMYALFVLGGICLLGLALTYVFTPETMMRSLEENESDRAQTQVGDGGSDTEAAKSPASMASSHLSMSPILPARVSV.

Over 1–22 (MAPIGVLTALDQARTQYYHFKA) the chain is Cytoplasmic. A helical membrane pass occupies residues 23–43 (IVIAGMGLFTDSYDLFCIAPV). Over 44-68 (MKIVGRVYYSDGGARPGVTPPAVVS) the chain is Extracellular. A helical transmembrane segment spans residues 69–89 (ATVGVALLGAVIGNVVFGALG). At 90–96 (DRVGRRR) the chain is on the cytoplasmic side. The chain crosses the membrane as a helical span at residues 97–117 (VYGACLLLMVCSSVGSGFSVC). The Extracellular segment spans residues 118–123 (RTRRCA). Residues 124–144 (LASLCFFRFLLGVGVGGDYPL) form a helical membrane-spanning segment. Residues 145-158 (SATIMSEFANRRTR) are Cytoplasmic-facing. A helical transmembrane segment spans residues 159–179 (GAFIAAVFSMQGFGILASSAV). The Extracellular segment spans residues 180 to 203 (TMAVAAAFDHYTGYPAPLDTPECA). Residues 204-224 (DLAWRIILMAGAVPAALTYYW) traverse the membrane as a helical segment. Topologically, residues 225 to 295 (RMSMPETARY…RRFVRQHGRD (71 aa)) are cytoplasmic. A helical transmembrane segment spans residues 296-316 (LFACAAAWFLLDIPYYSSTLF). Residues 317-342 (QSQIYRPLFPAPGLINAFQEAFNVAK) are Extracellular-facing. A helical membrane pass occupies residues 343 to 363 (FQAVIAVASTIPGYFVAVLLI). The Cytoplasmic segment spans residues 364-369 (DRVGRR). The helical transmembrane segment at 370–390 (CLQMAGFLLMAVFLFALAGPY) threads the bilayer. At 391–397 (DGYWRDH) the chain is on the extracellular side. The helical transmembrane segment at 398-418 (GAHAGYIVLYSLTFFSANLGP) threads the bilayer. Topologically, residues 419–439 (NTTTFILPAELFPARFRSTCH) are cytoplasmic. A helical transmembrane segment spans residues 440–460 (GLSGAAGKLGALVGSIGFLWA). Residues 461 to 473 (SQQKDGAAAGHLP) lie on the Extracellular side of the membrane. A helical transmembrane segment spans residues 474–494 (GIGMMYALFVLGGICLLGLAL). Topologically, residues 495 to 552 (TYVFTPETMMRSLEENESDRAQTQVGDGGSDTEAAKSPASMASSHLSMSPILPARVSV) are cytoplasmic. The segment at 507–540 (LEENESDRAQTQVGDGGSDTEAAKSPASMASSHL) is disordered.

It belongs to the major facilitator superfamily. Phosphate:H(+) symporter (TC 2.A.1.9) family. Expressed at low levels in roots.

The protein localises to the membrane. Its function is as follows. High-affinity transporter for external inorganic phosphate. In Oryza sativa subsp. japonica (Rice), this protein is Probable inorganic phosphate transporter 1-10 (PHT1-10).